A 468-amino-acid chain; its full sequence is Cell division protein FtsA (468 aa).

The disordered stretch occupies residues 416–468 (NKKDTHENEVESSDEEIYQSEDNHQEHKQNHEHVQDKDKEESKFKKLMKSLFE). Acidic residues predominate over residues 425–434 (VESSDEEIYQ). Positions 436 to 459 (EDNHQEHKQNHEHVQDKDKEESKF) are enriched in basic and acidic residues.

It belongs to the FtsA/MreB family. As to quaternary structure, self-interacts. Interacts with FtsZ.

Its subcellular location is the cell membrane. Cell division protein that is involved in the assembly of the Z ring. May serve as a membrane anchor for the Z ring. This Staphylococcus aureus (strain MRSA252) protein is Cell division protein FtsA.